The sequence spans 214 residues: MTLLAVDQLTVSRGGLAVLEGVSFSLAAGHALVLRGPNGIGKTTLLRTLAGLQPPLAGRVSMPPEGIAYAAHADGLKATLSVRENLQFWAAIHATDTVETALARMNLNALEHRAAASLSAGQKRRLGLARLLVTGRPVWVLDEPTVSLDAASVALFAEAVRAHLAAGGAALMATHIDLGLSEARVLDLAPFKARPPEAGGHRGAFDHGFDGAFL.

Residues 4–214 (LAVDQLTVSR…FDHGFDGAFL (211 aa)) form the ABC transporter domain. Residue 36–43 (GPNGIGKT) coordinates ATP.

It belongs to the ABC transporter superfamily. CcmA exporter (TC 3.A.1.107) family. In terms of assembly, the complex is composed of two ATP-binding proteins (CcmA) and two transmembrane proteins (CcmB).

The protein resides in the cell inner membrane. The enzyme catalyses heme b(in) + ATP + H2O = heme b(out) + ADP + phosphate + H(+). Functionally, part of the ABC transporter complex CcmAB involved in the biogenesis of c-type cytochromes; once thought to export heme, this seems not to be the case, but its exact role is uncertain. Responsible for energy coupling to the transport system. In Rhodobacter capsulatus (strain ATCC BAA-309 / NBRC 16581 / SB1003), this protein is Cytochrome c biogenesis ATP-binding export protein CcmA.